A 678-amino-acid polypeptide reads, in one-letter code: UvrABC system protein B (678 aa).

The Helicase ATP-binding domain occupies 31–417; the sequence is ENLNDGLAHQ…KSGTEIIDQV (387 aa). 44–51 is a binding site for ATP; that stretch reads GVTGSGKT. A Beta-hairpin motif is present at residues 97 to 120; that stretch reads YYDYYQPEAYVPSSDTFIEKDASI. In terms of domain architecture, Helicase C-terminal spans 436–602; that stretch reads QVDDLLSEAR…GLNKKVGELL (167 aa). The segment at 603–625 is disordered; sequence DIGQGGSNKSRNKPRSQKAAEPA. One can recognise a UVR domain in the interval 638–673; it reads QQQIKKLEQQMYKFAQDLEFEKAAAIRDQLHKLREQ.

It belongs to the UvrB family. Forms a heterotetramer with UvrA during the search for lesions. Interacts with UvrC in an incision complex.

The protein resides in the cytoplasm. In terms of biological role, the UvrABC repair system catalyzes the recognition and processing of DNA lesions. A damage recognition complex composed of 2 UvrA and 2 UvrB subunits scans DNA for abnormalities. Upon binding of the UvrA(2)B(2) complex to a putative damaged site, the DNA wraps around one UvrB monomer. DNA wrap is dependent on ATP binding by UvrB and probably causes local melting of the DNA helix, facilitating insertion of UvrB beta-hairpin between the DNA strands. Then UvrB probes one DNA strand for the presence of a lesion. If a lesion is found the UvrA subunits dissociate and the UvrB-DNA preincision complex is formed. This complex is subsequently bound by UvrC and the second UvrB is released. If no lesion is found, the DNA wraps around the other UvrB subunit that will check the other stand for damage. In Mannheimia succiniciproducens (strain KCTC 0769BP / MBEL55E), this protein is UvrABC system protein B.